The sequence spans 291 residues: Protease HtpX (291 aa).

2 consecutive transmembrane segments (helical) span residues 4 to 24 and 36 to 56; these read IALFLATNLAVMIVFSIVLNI and LSGLLVMAVLFGFGGSLVSLL. H143 contributes to the Zn(2+) binding site. E144 is an active-site residue. Residue H147 coordinates Zn(2+). A run of 2 helical transmembrane segments spans residues 151–171 and 199–219; these read GDMITMTLMQGVVNTFVIFLS and FIVSTVLEIAFGFLASFLTMW. E225 is a Zn(2+) binding site.

Belongs to the peptidase M48B family. Zn(2+) serves as cofactor.

The protein resides in the cell inner membrane. The chain is Protease HtpX from Aliivibrio salmonicida (strain LFI1238) (Vibrio salmonicida (strain LFI1238)).